A 231-amino-acid polypeptide reads, in one-letter code: Small ribosomal subunit protein uS2c (231 aa).

The protein belongs to the universal ribosomal protein uS2 family.

It localises to the plastid. It is found in the chloroplast. The polypeptide is Small ribosomal subunit protein uS2c (rps2) (Gracilaria tenuistipitata var. liui (Red alga)).